A 118-amino-acid polypeptide reads, in one-letter code: Small integral membrane protein 17 (118 aa).

The segment at 1 to 84 is disordered; it reads MQSLRPEQTR…DDESEGSQGF (84 aa). Residues 13–42 show a composition bias toward basic and acidic residues; it reads LEPERTKTLLPRESRAWEKPPHPACTKDWE. Residues 96-116 traverse the membrane as a helical segment; the sequence is IVLVVCVLFLFLVLTGMPMMF.

The protein localises to the membrane. The sequence is that of Small integral membrane protein 17 (SMIM17) from Homo sapiens (Human).